The sequence spans 343 residues: D-beta-hydroxybutyrate dehydrogenase, mitochondrial (343 aa).

The N-terminal 46 residues, 1–46, are a transit peptide targeting the mitochondrion; the sequence is MLAARLSRPLSQLPGKALSVCDRENGTRHTLLFYPASFSPDTRRTY. NAD(+) is bound at residue 59–83; the sequence is LVTGCDSGFGFSLAKHLHSKGFLVF. Lysine 73 carries the N6-acetyllysine modification. Lysine 103 bears the N6-acetyllysine; alternate mark. Residue lysine 103 is modified to N6-succinyllysine; alternate. 2 positions are modified to N6-acetyllysine: lysine 132 and lysine 177. A substrate-binding site is contributed by serine 195. The active-site Proton acceptor is tyrosine 208. Lysine 212 carries the post-translational modification N6-acetyllysine. O-linked (GlcNAc) serine glycosylation occurs at serine 219. Serine 246 is subject to Phosphoserine. The residue at position 258 (lysine 258) is an N6-acetyllysine. Lysine 259 carries the N6-acetyllysine; alternate modification. Position 259 is an N6-succinyllysine; alternate (lysine 259). Lysine 280 carries the post-translational modification N6-acetyllysine.

It belongs to the short-chain dehydrogenases/reductases (SDR) family. Homotetramer. Expressed in liver.

It localises to the mitochondrion inner membrane. It is found in the mitochondrion matrix. The enzyme catalyses (R)-3-hydroxybutanoate + NAD(+) = acetoacetate + NADH + H(+). Requires phosphatidylcholine as an allosteric activator for enzymatic activity. The polypeptide is D-beta-hydroxybutyrate dehydrogenase, mitochondrial (Rattus norvegicus (Rat)).